A 393-amino-acid polypeptide reads, in one-letter code: Phosphoglycerate kinase (393 aa).

Substrate contacts are provided by residues 21 to 23 (DLN), Arg36, 59 to 62 (HLGR), Arg114, and Arg147. ATP is bound by residues Lys198, Glu314, and 340-343 (GGDT).

This sequence belongs to the phosphoglycerate kinase family. Monomer.

The protein resides in the cytoplasm. It catalyses the reaction (2R)-3-phosphoglycerate + ATP = (2R)-3-phospho-glyceroyl phosphate + ADP. It functions in the pathway carbohydrate degradation; glycolysis; pyruvate from D-glyceraldehyde 3-phosphate: step 2/5. In Buchnera aphidicola subsp. Baizongia pistaciae (strain Bp), this protein is Phosphoglycerate kinase.